Reading from the N-terminus, the 539-residue chain is Phosphoenolpyruvate carboxykinase (ATP) (539 aa).

Substrate is bound by residues arginine 61, tyrosine 195, and lysine 201. Residues lysine 201, histidine 220, and 238–246 contribute to the ATP site; that span reads GLSGTGKTT. The Mn(2+) site is built by lysine 201 and histidine 220. Aspartate 259 provides a ligand contact to Mn(2+). Positions 287, 325, and 450 each coordinate ATP. Arginine 325 contacts substrate.

Belongs to the phosphoenolpyruvate carboxykinase (ATP) family. It depends on Mn(2+) as a cofactor.

It localises to the cytoplasm. It carries out the reaction oxaloacetate + ATP = phosphoenolpyruvate + ADP + CO2. It functions in the pathway carbohydrate biosynthesis; gluconeogenesis. Involved in the gluconeogenesis. Catalyzes the conversion of oxaloacetate (OAA) to phosphoenolpyruvate (PEP) through direct phosphoryl transfer between the nucleoside triphosphate and OAA. The chain is Phosphoenolpyruvate carboxykinase (ATP) from Methylorubrum extorquens (strain CM4 / NCIMB 13688) (Methylobacterium extorquens).